A 143-amino-acid chain; its full sequence is Mediator of RNA polymerase II transcription subunit 22 (143 aa).

This sequence belongs to the Mediator complex subunit 22 family. Component of the Mediator complex, which includes at least CDK8, MED4, MED6, MED11, MED14, MED17, MED18, MED20, MED21, MED22, MED27, MED28, MED30 and MED31.

Its subcellular location is the nucleus. Its function is as follows. Component of the Mediator complex, a coactivator involved in the regulated transcription of nearly all RNA polymerase II-dependent genes. Mediator functions as a bridge to convey information from gene-specific regulatory proteins to the basal RNA polymerase II transcription machinery. Mediator is recruited to promoters by direct interactions with regulatory proteins and serves as a scaffold for the assembly of a functional preinitiation complex with RNA polymerase II and the general transcription factors. The sequence is that of Mediator of RNA polymerase II transcription subunit 22 (MED22) from Drosophila melanogaster (Fruit fly).